Reading from the N-terminus, the 216-residue chain is Uracil phosphoribosyltransferase (216 aa).

30–34 (KNLVR) lines the GTP pocket. Residues R80, R105, and 140–148 (DPMIATAST) contribute to the 5-phospho-alpha-D-ribose 1-diphosphate site. Uracil contacts are provided by residues I203 and 208 to 210 (GDA). D209 serves as a coordination point for 5-phospho-alpha-D-ribose 1-diphosphate.

This sequence belongs to the UPRTase family. Mg(2+) serves as cofactor.

The catalysed reaction is UMP + diphosphate = 5-phospho-alpha-D-ribose 1-diphosphate + uracil. It functions in the pathway pyrimidine metabolism; UMP biosynthesis via salvage pathway; UMP from uracil: step 1/1. Allosterically activated by GTP. Functionally, catalyzes the conversion of uracil and 5-phospho-alpha-D-ribose 1-diphosphate (PRPP) to UMP and diphosphate. The protein is Uracil phosphoribosyltransferase of Saccharolobus islandicus (strain Y.N.15.51 / Yellowstone #2) (Sulfolobus islandicus).